The chain runs to 733 residues: Putative cyclic nucleotide-gated ion channel 9 (733 aa).

At 1-117 the chain is on the cytoplasmic side; that stretch reads MLDCGKKAVK…DKFLLLCNKL (117 aa). Residues 118–138 traverse the membrane as a helical segment; the sequence is FVTSCILAVSVDPLFLYLPFV. Topologically, residues 139 to 151 are extracellular; sequence KDNEKCIGIDRKL. A helical transmembrane segment spans residues 152 to 172; that stretch reads AIIATTLRTVIDAFYLFHMAL. The Cytoplasmic portion of the chain corresponds to 173-207; sequence RFRTAFVAPSSRVFGRGELVIDPAQIAKRYLQQYF. Residues 208–228 traverse the membrane as a helical segment; the sequence is IIDFLSVLPLPQIVVWRFLYI. At 229 to 239 the chain is on the extracellular side; that stretch reads SKGASVLATKR. A helical membrane pass occupies residues 240–260; the sequence is ALRSIILVQYIPRFIRLYPLS. The Cytoplasmic portion of the chain corresponds to 261 to 280; sequence SELKRTAGVFAETAWAGAAY. Residues 281-301 form a helical membrane-spanning segment; sequence YLLLYMLASHIVGAIWYLLAL. The Extracellular segment spans residues 302 to 406; it reads ERYNGCWTKV…GQGLETSTYP (105 aa). A helical membrane pass occupies residues 407–427; sequence GEVIFSIALAIAGLLLFALLI. Residues 428–733 are Cytoplasmic-facing; it reads GNMQTYLQSL…EPDFSADDTS (306 aa). Residues 513–637 and Glu584 contribute to the a nucleoside 3',5'-cyclic phosphate site; that span reads LFEN…SRQV. A calmodulin-binding region spans residues 629-644; it reads FRRLHSRQVQHTFRFY. In terms of domain architecture, IQ spans 649 to 678; the sequence is RTWAAIFIQAAWRRYVKKKKLEQLRKEEEE.

The protein belongs to the cyclic nucleotide-gated cation channel (TC 1.A.1.5) family. Homotetramer or heterotetramer.

It is found in the cell membrane. Functionally, putative cyclic nucleotide-gated ion channel. This is Putative cyclic nucleotide-gated ion channel 9 (CNGC9) from Arabidopsis thaliana (Mouse-ear cress).